The following is a 58-amino-acid chain: Large ribosomal subunit protein bL32 (58 aa).

It belongs to the bacterial ribosomal protein bL32 family.

In Sulfurihydrogenibium sp. (strain YO3AOP1), this protein is Large ribosomal subunit protein bL32.